Consider the following 616-residue polypeptide: Polypeptide N-acetylgalactosaminyltransferase 3 (616 aa).

A helical; Signal-anchor for type II membrane protein transmembrane segment spans residues 13–33; that stretch reads FFHWKLWKFSIIVFVFLVFLF. The segment at 182 to 291 is catalytic subdomain A; it reads LPTTSIIIVF…YGWLEPLLAR (110 aa). 3 residues coordinate Mn(2+): Asp-275, His-277, and His-413. Positions 354–416 are catalytic subdomain B; sequence PIRTPTFAGG…PCSVVGHVFR (63 aa). N-linked (GlcNAc...) asparagine glycosylation is present at Asn-482. In terms of domain architecture, Ricin B-type lectin spans 512–616; it reads NRMCLDVGEN…FQKWIFGQND (105 aa). An intrachain disulfide couples Cys-515 to Cys-533. Asp-517, Glu-520, His-534, and Asn-539 together coordinate UDP-N-acetyl-alpha-D-galactosamine. A disulfide bridge connects residues Cys-588 and Cys-601.

The protein belongs to the glycosyltransferase 2 family. GalNAc-T subfamily. Requires Mn(2+) as cofactor.

The protein resides in the golgi apparatus. The protein localises to the golgi stack membrane. It catalyses the reaction L-seryl-[protein] + UDP-N-acetyl-alpha-D-galactosamine = a 3-O-[N-acetyl-alpha-D-galactosaminyl]-L-seryl-[protein] + UDP + H(+). The catalysed reaction is L-threonyl-[protein] + UDP-N-acetyl-alpha-D-galactosamine = a 3-O-[N-acetyl-alpha-D-galactosaminyl]-L-threonyl-[protein] + UDP + H(+). It participates in protein modification; protein glycosylation. Catalyzes the initial reaction in O-linked oligosaccharide biosynthesis, the transfer of an N-acetyl-D-galactosamine residue to a serine or threonine residue on the protein receptor. Glycosylates FGF23. The sequence is that of Polypeptide N-acetylgalactosaminyltransferase 3 (GALNT3) from Taeniopygia guttata (Zebra finch).